The following is a 523-amino-acid chain: Light-independent protochlorophyllide reductase subunit B (523 aa).

Residue D36 coordinates [4Fe-4S] cluster. The active-site Proton donor is the D290. Residue 425–426 (GL) coordinates substrate.

The protein belongs to the ChlB/BchB/BchZ family. In terms of assembly, protochlorophyllide reductase is composed of three subunits; ChlL, ChlN and ChlB. Forms a heterotetramer of two ChlB and two ChlN subunits. [4Fe-4S] cluster is required as a cofactor.

The catalysed reaction is chlorophyllide a + oxidized 2[4Fe-4S]-[ferredoxin] + 2 ADP + 2 phosphate = protochlorophyllide a + reduced 2[4Fe-4S]-[ferredoxin] + 2 ATP + 2 H2O. The protein operates within porphyrin-containing compound metabolism; chlorophyll biosynthesis (light-independent). Its function is as follows. Component of the dark-operative protochlorophyllide reductase (DPOR) that uses Mg-ATP and reduced ferredoxin to reduce ring D of protochlorophyllide (Pchlide) to form chlorophyllide a (Chlide). This reaction is light-independent. The NB-protein (ChlN-ChlB) is the catalytic component of the complex. In Prochlorococcus marinus (strain MIT 9215), this protein is Light-independent protochlorophyllide reductase subunit B.